The chain runs to 289 residues: MKLSFTKMHGAGNDFVVLDGYTRALPPLTGAQVRALADRHFGIGADQLLLVEKPTVDGADFKYRIFNCDGGEVEHCGNGARCFVKFVRDHGLTGKASVRVEVKHGVITLTMQDNGEVVVDMGAPVFEPARVPFDASGLDGRREGADTLWPLPVNGVTRWISVVSMGNPHAVQIVDDAEAFAVRVDGPAIERDPRFPQRVNAGFMQVVSRHEVNLRVYERGAGETLACGTGACAAVAAGIRRGRLDSPVTVHTHGGTLTISWNGARDERAPLMMAGPATTVFEGVIELPA.

Residues Asn-13, Gln-47, and Asn-67 each coordinate substrate. Catalysis depends on Cys-76, which acts as the Proton donor. Residues 77 to 78, Asn-167, Asn-200, and 218 to 219 each bind substrate; these read GN and ER. The active-site Proton acceptor is the Cys-227. 228 to 229 is a substrate binding site; that stretch reads GT.

Belongs to the diaminopimelate epimerase family. As to quaternary structure, homodimer.

It is found in the cytoplasm. The enzyme catalyses (2S,6S)-2,6-diaminopimelate = meso-2,6-diaminopimelate. It participates in amino-acid biosynthesis; L-lysine biosynthesis via DAP pathway; DL-2,6-diaminopimelate from LL-2,6-diaminopimelate: step 1/1. Catalyzes the stereoinversion of LL-2,6-diaminopimelate (L,L-DAP) to meso-diaminopimelate (meso-DAP), a precursor of L-lysine and an essential component of the bacterial peptidoglycan. In Burkholderia pseudomallei (strain 668), this protein is Diaminopimelate epimerase.